Here is a 20-residue protein sequence, read N- to C-terminus: EWEPVQNGGSSYYMVPRIWA.

This sequence belongs to the protease inhibitor I3 (leguminous Kunitz-type inhibitor) family.

Its function is as follows. Inhibits soybean trypsin. Has antifungal activity against R.cerealis, A.brassicae and A.niger, and weak antifungal activity against F.oxysporum. The chain is Antifungal protein from Cullen corylifolium (Malaysian scurfpea).